An 86-amino-acid polypeptide reads, in one-letter code: Anti-adapter protein IraP (86 aa).

Positions 1-36 (MKNLIAELLFKLAQKEEESKELCAQVEALEIIVTAM) form a coiled coil.

This sequence belongs to the IraP family. In terms of assembly, interacts with RssB.

It is found in the cytoplasm. In terms of biological role, inhibits RpoS proteolysis by regulating RssB activity, thereby increasing the stability of the sigma stress factor RpoS especially during phosphate starvation, but also in stationary phase and during nitrogen starvation. Its effect on RpoS stability is due to its interaction with RssB, which probably blocks the interaction of RssB with RpoS, and the consequent delivery of the RssB-RpoS complex to the ClpXP protein degradation pathway. The protein is Anti-adapter protein IraP of Shigella flexneri serotype 5b (strain 8401).